Here is a 354-residue protein sequence, read N- to C-terminus: DNA integrity scanning protein DisA (354 aa).

The DAC domain maps to 6 to 144 (GIGIKNVLKI…GDIKYVLRES (139 aa)). Residues glycine 73, leucine 91, and 104-108 (TRHRT) contribute to the ATP site.

This sequence belongs to the DisA family. In terms of assembly, homooctamer. The cofactor is Mg(2+).

The catalysed reaction is 2 ATP = 3',3'-c-di-AMP + 2 diphosphate. Functionally, participates in a DNA-damage check-point that is active prior to asymmetric division when DNA is damaged. DisA forms globular foci that rapidly scan along the chromosomes during sporulation, searching for lesions. When a lesion is present, DisA pauses at the lesion site. This triggers a cellular response that culminates in a temporary block in sporulation initiation. In terms of biological role, also has diadenylate cyclase activity, catalyzing the condensation of 2 ATP molecules into cyclic di-AMP (c-di-AMP). c-di-AMP acts as a signaling molecule that couples DNA integrity with progression of sporulation. The rise in c-di-AMP level generated by DisA while scanning the chromosome, operates as a positive signal that advances sporulation; upon encountering a lesion, the DisA focus arrests at the damaged site and halts c-di-AMP synthesis. The protein is DNA integrity scanning protein DisA of Clostridium beijerinckii (strain ATCC 51743 / NCIMB 8052) (Clostridium acetobutylicum).